Here is a 427-residue protein sequence, read N- to C-terminus: Histidine--tRNA ligase (427 aa).

Belongs to the class-II aminoacyl-tRNA synthetase family. In terms of assembly, homodimer.

The protein resides in the cytoplasm. It carries out the reaction tRNA(His) + L-histidine + ATP = L-histidyl-tRNA(His) + AMP + diphosphate + H(+). The polypeptide is Histidine--tRNA ligase (Lacticaseibacillus casei (strain BL23) (Lactobacillus casei)).